Consider the following 382-residue polypeptide: Putative NADPH dehydrogenase C5H10.04 (382 aa).

Threonine 28 and histidine 189 together coordinate FMN. Positions 189 and 192 each coordinate substrate. FMN contacts are provided by arginine 242 and arginine 334. Tyrosine 361 is a substrate binding site.

This sequence belongs to the NADH:flavin oxidoreductase/NADH oxidase family. As to quaternary structure, homodimer or heterodimer. It depends on FMN as a cofactor.

The catalysed reaction is A + NADPH + H(+) = AH2 + NADP(+). This Schizosaccharomyces pombe (strain 972 / ATCC 24843) (Fission yeast) protein is Putative NADPH dehydrogenase C5H10.04.